The primary structure comprises 209 residues: Octanoyltransferase (209 aa).

A BPL/LPL catalytic domain is found at 30–209 (DHEPEIIYLV…IQTEFNKIFK (180 aa)). Substrate is bound by residues 69-76 (RGGKFTFH), 143-145 (AIG), and 156-158 (GVA). The Acyl-thioester intermediate role is filled by Cys-174.

The protein belongs to the LipB family.

It localises to the cytoplasm. It catalyses the reaction octanoyl-[ACP] + L-lysyl-[protein] = N(6)-octanoyl-L-lysyl-[protein] + holo-[ACP] + H(+). The protein operates within protein modification; protein lipoylation via endogenous pathway; protein N(6)-(lipoyl)lysine from octanoyl-[acyl-carrier-protein]: step 1/2. Catalyzes the transfer of endogenously produced octanoic acid from octanoyl-acyl-carrier-protein onto the lipoyl domains of lipoate-dependent enzymes. Lipoyl-ACP can also act as a substrate although octanoyl-ACP is likely to be the physiological substrate. In Rickettsia africae (strain ESF-5), this protein is Octanoyltransferase.